The primary structure comprises 338 residues: Serpentine receptor class alpha-31 (338 aa).

7 consecutive transmembrane segments (helical) span residues 23 to 43, 59 to 79, 108 to 125, 142 to 162, 188 to 208, 240 to 260, and 276 to 296; these read GNHC…VFAI, LLFS…GIRI, LYYY…SLFF, FSKI…YWIF, VNEF…VIFF, VCII…TTEI, and SIAF…IIIY.

This sequence belongs to the nematode receptor-like protein sra family.

The protein localises to the membrane. This Caenorhabditis elegans protein is Serpentine receptor class alpha-31 (sra-31).